The chain runs to 141 residues: Large ribosomal subunit protein uL11 (141 aa).

This sequence belongs to the universal ribosomal protein uL11 family. As to quaternary structure, part of the ribosomal stalk of the 50S ribosomal subunit. Interacts with L10 and the large rRNA to form the base of the stalk. L10 forms an elongated spine to which L12 dimers bind in a sequential fashion forming a multimeric L10(L12)X complex. One or more lysine residues are methylated.

In terms of biological role, forms part of the ribosomal stalk which helps the ribosome interact with GTP-bound translation factors. The sequence is that of Large ribosomal subunit protein uL11 from Pelodictyon phaeoclathratiforme (strain DSM 5477 / BU-1).